The primary structure comprises 356 residues: Mannonate dehydratase (356 aa).

It belongs to the mannonate dehydratase family. Requires Fe(2+) as cofactor. Mn(2+) is required as a cofactor.

It carries out the reaction D-mannonate = 2-dehydro-3-deoxy-D-gluconate + H2O. It functions in the pathway carbohydrate metabolism; pentose and glucuronate interconversion. In terms of biological role, catalyzes the dehydration of D-mannonate. This Levilactobacillus brevis (strain ATCC 367 / BCRC 12310 / CIP 105137 / JCM 1170 / LMG 11437 / NCIMB 947 / NCTC 947) (Lactobacillus brevis) protein is Mannonate dehydratase.